Reading from the N-terminus, the 259-residue chain is Sesquipedalian-2 (259 aa).

The 105-residue stretch at 17 to 121 (PADHTGFLRS…WVKALSRASF (105 aa)) folds into the PH domain. A coiled-coil region spans residues 124–150 (MRLVVRELESQLQDARQSLALHRCASQ). The disordered stretch occupies residues 155 to 178 (SCSKSQAPDHRAPDPENGHFLPRD). A compositionally biased stretch (basic and acidic residues) spans 161–178 (APDHRAPDPENGHFLPRD). Residues 223–235 (CFSTLHDWYGKEI) carry the F&amp;H motif.

It belongs to the sesquipedalian family. As to quaternary structure, forms homodimers and heterodimers with PHETA1. Interacts with OCRL and INPP5B.

It is found in the early endosome. The protein resides in the recycling endosome. Its subcellular location is the golgi apparatus. The protein localises to the trans-Golgi network. It localises to the cytoplasmic vesicle. It is found in the clathrin-coated vesicle. Its function is as follows. Plays a role in endocytic trafficking. Required for receptor recycling from endosomes, both to the trans-Golgi network and the plasma membrane. This Mus musculus (Mouse) protein is Sesquipedalian-2.